A 251-amino-acid polypeptide reads, in one-letter code: Probable aquaporin TIP4-1 (251 aa).

Helical transmembrane passes span 26–46 (LVLT…AGVP) and 57–77 (ALAG…TAGF). The NPA 1 motif lies at 85–87 (NPA). Helical transmembrane passes span 104-124 (ALYV…LRYL), 144-164 (GLVM…ATIL), and 170-190 (VPGF…IAGG). An NPA 2 motif is present at residues 198-200 (NPA). A helical membrane pass occupies residues 219 to 239 (WLGPLIGGPLAGLVYESLFLV).

The protein belongs to the MIP/aquaporin (TC 1.A.8) family. TIP (TC 1.A.8.10) subfamily. In terms of tissue distribution, expressed in roots, leaves and anthers.

The protein localises to the vacuole membrane. In terms of biological role, aquaporins facilitate the transport of water and small neutral solutes across cell membranes. May be involved in transport from the vacuolar compartment to the cytoplasm. In Oryza sativa subsp. japonica (Rice), this protein is Probable aquaporin TIP4-1 (TIP4-1).